Here is a 156-residue protein sequence, read N- to C-terminus: Cellulose synthase operon protein D (156 aa).

It participates in glycan metabolism; bacterial cellulose biosynthesis. May have a major role in the perfection of crystallization, involved either in the pore structure itself or in the organization of the pores within the linear array of terminal synthesizing complexes (TCs). This is Cellulose synthase operon protein D from Komagataeibacter xylinus (Gluconacetobacter xylinus).